The primary structure comprises 189 residues: Peptidyl-tRNA hydrolase (189 aa).

A tRNA-binding site is contributed by Tyr-14. His-19 serves as the catalytic Proton acceptor. 3 residues coordinate tRNA: Tyr-64, Asn-66, and Asn-112.

Belongs to the PTH family. As to quaternary structure, monomer.

Its subcellular location is the cytoplasm. The enzyme catalyses an N-acyl-L-alpha-aminoacyl-tRNA + H2O = an N-acyl-L-amino acid + a tRNA + H(+). Functionally, hydrolyzes ribosome-free peptidyl-tRNAs (with 1 or more amino acids incorporated), which drop off the ribosome during protein synthesis, or as a result of ribosome stalling. Catalyzes the release of premature peptidyl moieties from peptidyl-tRNA molecules trapped in stalled 50S ribosomal subunits, and thus maintains levels of free tRNAs and 50S ribosomes. The chain is Peptidyl-tRNA hydrolase from Clostridium botulinum (strain 657 / Type Ba4).